The sequence spans 154 residues: 6,7-dimethyl-8-ribityllumazine synthase (154 aa).

5-amino-6-(D-ribitylamino)uracil contacts are provided by residues phenylalanine 22, 57–59 (VCE), and 81–83 (TVI). Position 86–87 (86–87 (KT)) interacts with (2S)-2-hydroxy-3-oxobutyl phosphate. Histidine 89 (proton donor) is an active-site residue. Valine 114 lines the 5-amino-6-(D-ribitylamino)uracil pocket. Arginine 128 is a binding site for (2S)-2-hydroxy-3-oxobutyl phosphate.

This sequence belongs to the DMRL synthase family. Forms an icosahedral capsid composed of 60 subunits, arranged as a dodecamer of pentamers.

It catalyses the reaction (2S)-2-hydroxy-3-oxobutyl phosphate + 5-amino-6-(D-ribitylamino)uracil = 6,7-dimethyl-8-(1-D-ribityl)lumazine + phosphate + 2 H2O + H(+). Its pathway is cofactor biosynthesis; riboflavin biosynthesis; riboflavin from 2-hydroxy-3-oxobutyl phosphate and 5-amino-6-(D-ribitylamino)uracil: step 1/2. In terms of biological role, catalyzes the formation of 6,7-dimethyl-8-ribityllumazine by condensation of 5-amino-6-(D-ribitylamino)uracil with 3,4-dihydroxy-2-butanone 4-phosphate. This is the penultimate step in the biosynthesis of riboflavin. This Wigglesworthia glossinidia brevipalpis protein is 6,7-dimethyl-8-ribityllumazine synthase.